The primary structure comprises 406 residues: Interactor protein for cytohesin exchange factors 1 (406 aa).

The PH domain occupies 13–112; sequence HADCQGWLYK…WLNKLGFAVT (100 aa). 3 disordered regions span residues 118–173, 228–285, and 383–406; these read TKDE…FSSL, CRVS…EDDE, and PQDP…ENSL. A compositionally biased stretch (acidic residues) spans 123 to 134; that stretch reads CYSESEQEDPET. The span at 144–160 shows a compositional bias: low complexity; it reads ASATSSPVAARRASSSS. The segment covering 228–239 has biased composition (polar residues); that stretch reads CRVSENSSTTPE. Low complexity predominate over residues 243–259; sequence LNSLSSDDTSSLNNSQD. The segment covering 272 to 285 has biased composition (basic and acidic residues); sequence MTDRDEIKSSEDDE. A necessary for interaction with PSCD2 and to translocate to the plasma membrane region spans residues 285-406; that stretch reads EMEKLYKSLE…TSSDCVENSL (122 aa). The span at 392 to 406 shows a compositional bias: polar residues; sequence EIMNPTSSDCVENSL.

Interacts with guanine-nucleotide exchange factors PSCD1, PSCD2, PSCD3 and PSCD4. As to expression, expressed in brain, spleen, lung, testis and kidney.

Its subcellular location is the cytoplasm. It localises to the cell membrane. Enhances the promotion of guanine-nucleotide exchange by PSCD2 on ARF6 in a concentration-dependent manner. The sequence is that of Interactor protein for cytohesin exchange factors 1 (Ipcef1) from Rattus norvegicus (Rat).